The primary structure comprises 269 residues: 4-hydroxy-tetrahydrodipicolinate reductase (269 aa).

Position 9 to 14 (9 to 14 (GVAGRM)) interacts with NAD(+). R36 contacts NADP(+). NAD(+) contacts are provided by residues 99–101 (GTT) and 123–126 (APNM). H156 acts as the Proton donor/acceptor in catalysis. H157 serves as a coordination point for (S)-2,3,4,5-tetrahydrodipicolinate. K160 serves as the catalytic Proton donor. 166–167 (GT) lines the (S)-2,3,4,5-tetrahydrodipicolinate pocket.

The protein belongs to the DapB family.

The protein resides in the cytoplasm. The catalysed reaction is (S)-2,3,4,5-tetrahydrodipicolinate + NAD(+) + H2O = (2S,4S)-4-hydroxy-2,3,4,5-tetrahydrodipicolinate + NADH + H(+). The enzyme catalyses (S)-2,3,4,5-tetrahydrodipicolinate + NADP(+) + H2O = (2S,4S)-4-hydroxy-2,3,4,5-tetrahydrodipicolinate + NADPH + H(+). Its pathway is amino-acid biosynthesis; L-lysine biosynthesis via DAP pathway; (S)-tetrahydrodipicolinate from L-aspartate: step 4/4. Its function is as follows. Catalyzes the conversion of 4-hydroxy-tetrahydrodipicolinate (HTPA) to tetrahydrodipicolinate. The protein is 4-hydroxy-tetrahydrodipicolinate reductase of Methylococcus capsulatus (strain ATCC 33009 / NCIMB 11132 / Bath).